A 574-amino-acid polypeptide reads, in one-letter code: Probable glucomannan 4-beta-mannosyltransferase 6 (574 aa).

A helical membrane pass occupies residues 87 to 107; that stretch reads VVACMVMSVIVLAEKVFLGVV. Aspartate 180 is an active-site residue. Positions 239 and 241 each coordinate substrate. Aspartate 333 is a catalytic residue. 4 consecutive transmembrane segments (helical) span residues 412–432, 437–457, 523–543, and 548–568; these read IIST…KVFF, IPLW…SVGT, FHCL…YDYL, and IFYI…FEFM.

This sequence belongs to the glycosyltransferase 2 family. Plant cellulose synthase-like A subfamily.

It is found in the golgi apparatus membrane. The catalysed reaction is GDP-mannose + (glucomannan)n = GDP + (glucomannan)n+1.. In terms of biological role, probable mannan synthase which consists of a 4-beta-mannosyltransferase activity on mannan using GDP-mannose. The beta-1,4-mannan product is the backbone for galactomannan synthesis by galactomannan galactosyltransferase. Galactomannan is a noncellulosic polysaccharides of plant cell wall. The sequence is that of Probable glucomannan 4-beta-mannosyltransferase 6 from Oryza sativa subsp. japonica (Rice).